Consider the following 85-residue polypeptide: Acyl carrier protein ScoB (85 aa).

Positions 1-77 constitute a Carrier domain; it reads MPAPLTLDGF…QWWQLLSARQ (77 aa). Ser-38 bears the O-(pantetheine 4'-phosphoryl)serine mark.

Belongs to the acyl carrier protein (ACP) family. Requires pantetheine 4'-phosphate as cofactor.

Its pathway is lipid metabolism; fatty acid metabolism. Functionally, acyl-carrier protein (ACP) involved in the biosynthesis of a unique class of isonitrile lipopeptides (INLPs). Is the dedicated ACP for the loading of activated acyl groups catalyzed by ScoC. This Streptomyces coeruleorubidus protein is Acyl carrier protein ScoB.